A 1392-amino-acid chain; its full sequence is Ankyrin repeat domain-containing protein 30B (1392 aa).

Residues methionine 1 to phenylalanine 21 form a disordered region. 5 ANK repeats span residues lysine 72–valine 101, glutamate 105–tyrosine 134, tyrosine 138–valine 167, alanine 171–alanine 200, and serine 204–alanine 233. 6 disordered regions span residues proline 265–proline 292, alanine 558–lysine 587, aspartate 636–glycine 656, arginine 671–glycine 690, lysine 830–glutamate 877, and glycine 904–valine 926. Polar residues-rich tracts occupy residues asparagine 267–threonine 280 and aspartate 576–glutamine 586. The span at aspartate 636–leucine 650 shows a compositional bias: basic and acidic residues. A compositionally biased stretch (polar residues) spans lysine 830–glutamine 840. 2 stretches are compositionally biased toward basic and acidic residues: residues leucine 864–serine 874 and glycine 904–histidine 915. Coiled-coil stretches lie at residues arginine 960 to lysine 1168 and glutamate 1270 to valine 1318.

Expressed in brain, breast and testis.

This is Ankyrin repeat domain-containing protein 30B (ANKRD30B) from Homo sapiens (Human).